The following is a 316-amino-acid chain: ATP synthase gamma chain (316 aa).

This sequence belongs to the ATPase gamma chain family. F-type ATPases have 2 components, CF(1) - the catalytic core - and CF(0) - the membrane proton channel. CF(1) has five subunits: alpha(3), beta(3), gamma(1), delta(1), epsilon(1). CF(0) has three main subunits: a, b and c.

It localises to the cellular thylakoid membrane. In terms of biological role, produces ATP from ADP in the presence of a proton gradient across the membrane. The gamma chain is believed to be important in regulating ATPase activity and the flow of protons through the CF(0) complex. The chain is ATP synthase gamma chain from Prochlorococcus marinus (strain AS9601).